We begin with the raw amino-acid sequence, 432 residues long: GTPase Obg (432 aa).

The region spanning 1 to 158 is the Obg domain; sequence MFVDQIKIEV…RKLKLELKVL (158 aa). The OBG-type G domain occupies 159–335; that stretch reads ADVGLVGFPS…LTHRTADVLE (177 aa). Residues 165–172, 190–194, 212–215, 282–285, and 316–318 contribute to the GTP site; these read GFPSVGKS, FTTLV, DLPG, SKMD, and SSL. Residues Ser-172 and Thr-192 each contribute to the Mg(2+) site. Residues 354–432 enclose the OCT domain; that stretch reads TFKEDEPAFK…IEDFTFEFVE (79 aa).

The protein belongs to the TRAFAC class OBG-HflX-like GTPase superfamily. OBG GTPase family. In terms of assembly, monomer. Mg(2+) is required as a cofactor.

Its subcellular location is the cytoplasm. An essential GTPase which binds GTP, GDP and possibly (p)ppGpp with moderate affinity, with high nucleotide exchange rates and a fairly low GTP hydrolysis rate. Plays a role in control of the cell cycle, stress response, ribosome biogenesis and in those bacteria that undergo differentiation, in morphogenesis control. This chain is GTPase Obg, found in Ligilactobacillus salivarius (strain UCC118) (Lactobacillus salivarius).